A 447-amino-acid polypeptide reads, in one-letter code: Glutamine synthetase (447 aa).

The GS beta-grasp domain maps to 20 to 105 (RDVKFIRTQF…ILGDVYLPDG (86 aa)). The GS catalytic domain occupies 112-447 (PRYVLKTAIK…WELSRYLSML (336 aa)). Mg(2+) contacts are provided by glutamate 135 and glutamate 137. Residue glutamate 187 participates in ATP binding. Mg(2+) contacts are provided by glutamate 192 and glutamate 199. L-glutamate-binding positions include 243 to 244 (NG) and glycine 244. Histidine 248 contributes to the Mg(2+) binding site. Serine 252 contacts ATP. L-glutamate is bound by residues arginine 301, glutamate 307, and arginine 319. Residues arginine 319 and arginine 324 each contribute to the ATP site. Mg(2+) is bound at residue glutamate 336. Arginine 338 is a binding site for L-glutamate.

Belongs to the glutamine synthetase family. Homohexamer. Interacts and forms stable complexes with the regulatory protein GlnK1. Mg(2+) is required as a cofactor.

The protein localises to the cytoplasm. The enzyme catalyses L-glutamate + NH4(+) + ATP = L-glutamine + ADP + phosphate + H(+). With respect to regulation, directly stimulated by the effector molecule 2-oxoglutarate. Inhibited by GlnK1. 2-oxoglutarate antagonizes the inhibitory effects of GlnK1, but does not prevent GlnK1/GlnA1 complex formation. Functionally, probably involved in nitrogen metabolism via ammonium assimilation. Catalyzes the ATP-dependent biosynthesis of glutamine from glutamate and ammonia. In Methanosarcina mazei (strain ATCC BAA-159 / DSM 3647 / Goe1 / Go1 / JCM 11833 / OCM 88) (Methanosarcina frisia), this protein is Glutamine synthetase.